We begin with the raw amino-acid sequence, 427 residues long: Inward rectifier potassium channel 2 (427 aa).

At 1–81 the chain is on the cytoplasmic side; sequence MGSVRTNRYS…IFTTCVDIRW (81 aa). Cys76 carries the S-nitrosocysteine modification. A helical membrane pass occupies residues 82-106; sequence RWMLVIFCLAFVLSWLFFGCVFWLI. The Extracellular segment spans residues 107 to 128; the sequence is ALLHGDLDASKESKACVSEVNS. The segment at residues 129–140 is an intramembrane region (helical; Pore-forming); the sequence is FTAAFLFSIETQ. The pore-forming intramembrane region spans 141 to 147; sequence TTIGYGF. The Selectivity filter signature appears at 142-147; the sequence is TIGYGF. At 148-156 the chain is on the extracellular side; the sequence is RCVTDECPI. The chain crosses the membrane as a helical span at residues 157–178; it reads AVFMVVFQSIVGCIIDAFIIGA. The Cytoplasmic portion of the chain corresponds to 179-427; sequence VMAKMAKPKK…PRPLRRESEI (249 aa). The segment at 181–208 is polyphosphoinositide (PIP2)-binding; sequence AKMAKPKKRNETLVFSHNAVIAMRDGKL. Residues 384-427 form a disordered region; it reads SKEEDDSENGVPESTSTDTPPDIDLHNQASVPLEPRPLRRESEI. Residues 425–427 carry the PDZ-binding motif; sequence SEI.

Belongs to the inward rectifier-type potassium channel (TC 1.A.2.1) family. KCNJ2 subfamily. As to quaternary structure, homotetramer. Homomultimeric and heteromultimeric association with KCNJ4/Kir2.3. Can form heteromeric channels with Kir2.6/KCNJ18. Associates, via its PDZ-recognition domain, with a complex containing LIN7A, LIN7B, LIN7C, DLG1, CASK and APBA1. Post-translationally, S-nitrosylation increases the open probability and inward rectifying currents.

It localises to the cell membrane. It is found in the sarcolemma. Its subcellular location is the T-tubule. It catalyses the reaction K(+)(in) = K(+)(out). Activated by phosphatidylinositol 4,5 biphosphate (PtdIns(4,5)P2). Functionally, inward rectifier potassium channels are characterized by a greater tendency to allow potassium to flow into the cell rather than out of it. Their voltage dependence is regulated by the concentration of extracellular potassium; as external potassium is raised, the voltage range of the channel opening shifts to more positive voltages. The inward rectification is mainly due to the blockage of outward current by internal magnesium. Can be blocked by extracellular barium and cesium. Probably participates in establishing action potential waveform and excitability of neuronal and muscle tissues. The polypeptide is Inward rectifier potassium channel 2 (KCNJ2) (Sus scrofa (Pig)).